A 363-amino-acid polypeptide reads, in one-letter code: GTPase Obg (363 aa).

The Obg domain occupies 1–159; it reads MKFVDEAFID…KSLKLELKVL (159 aa). Residues 160–341 enclose the OBG-type G domain; it reads ADVGLLGRPN…LVHAIFGHVQ (182 aa). GTP is bound by residues 166-173, 191-195, 213-216, 291-294, and 322-324; these read GRPNAGKS, FTTLH, DIPG, NKLD, and SAL. Residues Ser-173 and Thr-193 each coordinate Mg(2+). A disordered region spans residues 343 to 363; sequence GQRMDNEPPPLDPRFASAGPA.

Belongs to the TRAFAC class OBG-HflX-like GTPase superfamily. OBG GTPase family. Monomer. Mg(2+) serves as cofactor.

The protein localises to the cytoplasm. In terms of biological role, an essential GTPase which binds GTP, GDP and possibly (p)ppGpp with moderate affinity, with high nucleotide exchange rates and a fairly low GTP hydrolysis rate. Plays a role in control of the cell cycle, stress response, ribosome biogenesis and in those bacteria that undergo differentiation, in morphogenesis control. The sequence is that of GTPase Obg from Verminephrobacter eiseniae (strain EF01-2).